The sequence spans 631 residues: Chaperone protein DnaK (631 aa).

Threonine 198 is subject to Phosphothreonine; by autocatalysis. Residues 602–631 (EAAGGAQQAGKDDVVDAEFTEVDDDKKKSA) form a disordered region.

Belongs to the heat shock protein 70 family.

Its function is as follows. Acts as a chaperone. This is Chaperone protein DnaK from Rhodopseudomonas palustris (strain ATCC BAA-98 / CGA009).